The chain runs to 233 residues: Large ribosomal subunit protein uL1 (233 aa).

It belongs to the universal ribosomal protein uL1 family. As to quaternary structure, part of the 50S ribosomal subunit.

In terms of biological role, binds directly to 23S rRNA. The L1 stalk is quite mobile in the ribosome, and is involved in E site tRNA release. Functionally, protein L1 is also a translational repressor protein, it controls the translation of the L11 operon by binding to its mRNA. In Proteus mirabilis (strain HI4320), this protein is Large ribosomal subunit protein uL1.